The sequence spans 417 residues: UDP-N-acetylglucosamine 1-carboxyvinyltransferase 2 (417 aa).

Lysine 22–asparagine 23 is a binding site for phosphoenolpyruvate. Arginine 92 is a binding site for UDP-N-acetyl-alpha-D-glucosamine. The active-site Proton donor is cysteine 116. Cysteine 116 is subject to 2-(S-cysteinyl)pyruvic acid O-phosphothioketal. Residues arginine 121 to leucine 125, aspartate 305, and isoleucine 327 each bind UDP-N-acetyl-alpha-D-glucosamine.

The protein belongs to the EPSP synthase family. MurA subfamily.

It localises to the cytoplasm. The enzyme catalyses phosphoenolpyruvate + UDP-N-acetyl-alpha-D-glucosamine = UDP-N-acetyl-3-O-(1-carboxyvinyl)-alpha-D-glucosamine + phosphate. It participates in cell wall biogenesis; peptidoglycan biosynthesis. Cell wall formation. Adds enolpyruvyl to UDP-N-acetylglucosamine. This is UDP-N-acetylglucosamine 1-carboxyvinyltransferase 2 from Caldanaerobacter subterraneus subsp. tengcongensis (strain DSM 15242 / JCM 11007 / NBRC 100824 / MB4) (Thermoanaerobacter tengcongensis).